Consider the following 170-residue polypeptide: Large ribosomal subunit protein uL10 (170 aa).

It belongs to the universal ribosomal protein uL10 family. Part of the ribosomal stalk of the 50S ribosomal subunit. The N-terminus interacts with L11 and the large rRNA to form the base of the stalk. The C-terminus forms an elongated spine to which L12 dimers bind in a sequential fashion forming a multimeric L10(L12)X complex.

Its function is as follows. Forms part of the ribosomal stalk, playing a central role in the interaction of the ribosome with GTP-bound translation factors. In Lactobacillus helveticus (strain DPC 4571), this protein is Large ribosomal subunit protein uL10.